We begin with the raw amino-acid sequence, 138 residues long: Large ribosomal subunit protein bL17 (138 aa).

The protein belongs to the bacterial ribosomal protein bL17 family. In terms of assembly, part of the 50S ribosomal subunit. Contacts protein L32.

This chain is Large ribosomal subunit protein bL17, found in Methylorubrum extorquens (strain PA1) (Methylobacterium extorquens).